A 90-amino-acid polypeptide reads, in one-letter code: Probable Fe(2+)-trafficking protein (90 aa).

This sequence belongs to the Fe(2+)-trafficking protein family.

In terms of biological role, could be a mediator in iron transactions between iron acquisition and iron-requiring processes, such as synthesis and/or repair of Fe-S clusters in biosynthetic enzymes. The protein is Probable Fe(2+)-trafficking protein of Chromobacterium violaceum (strain ATCC 12472 / DSM 30191 / JCM 1249 / CCUG 213 / NBRC 12614 / NCIMB 9131 / NCTC 9757 / MK).